The sequence spans 153 residues: NAD(P)H-quinone oxidoreductase subunit N (153 aa).

The protein belongs to the complex I NdhN subunit family. In terms of assembly, NDH-1 can be composed of about 15 different subunits; different subcomplexes with different compositions have been identified which probably have different functions.

Its subcellular location is the cellular thylakoid membrane. The enzyme catalyses a plastoquinone + NADH + (n+1) H(+)(in) = a plastoquinol + NAD(+) + n H(+)(out). It carries out the reaction a plastoquinone + NADPH + (n+1) H(+)(in) = a plastoquinol + NADP(+) + n H(+)(out). Its function is as follows. NDH-1 shuttles electrons from an unknown electron donor, via FMN and iron-sulfur (Fe-S) centers, to quinones in the respiratory and/or the photosynthetic chain. The immediate electron acceptor for the enzyme in this species is believed to be plastoquinone. Couples the redox reaction to proton translocation, and thus conserves the redox energy in a proton gradient. Cyanobacterial NDH-1 also plays a role in inorganic carbon-concentration. This chain is NAD(P)H-quinone oxidoreductase subunit N, found in Prochlorococcus marinus (strain MIT 9313).